A 1410-amino-acid polypeptide reads, in one-letter code: MLICFIFILLIPESATCPAECVCVDRTVSCVGQQLTEVPQNIPNDTIRLDLQDNEITKIGPNDFSSLMNLKALQLMDNQIVTIHNQSFSSLVFLQKLRLSRNRIRHLPDNVFQNNLKLTHLDLSENDITVVSDAQLQGPEFLEVLNLDKNHIFCLENNVISSWVSLEVLTLNGNRLTTFEEPSNARFRQLDLFNNPWNCDCRLRWMRKWLEKAEGQNKTVCATPLNLQGSSIEILQDKFMTCSGNRKRRYKKTCETAEICPLPCTCTGTTVDCRDSGLTYVPTNLPPSTTEIRLEQNQISSIPSHSFKNLKNLTRLDLSKNIITEIQPKAFLGLHNLHTLVLYGNNITDLKSDTFEGLGSLQLLLLNANQLTCIRRGTFDHVPKLSMLSLYDNDIKSISEVTFQNLTSLSTLHLAKNPLICDCNLQWLAQINLQKNIETSGARCEQPKRLRKKKFATLPPNKFKCKGSESFVSMYADSCFIDSICPTQCDCYGTTVDCNKRGLNTIPTSIPRFATQLLLSGNNISTVDLNSNIHVLENLEVLDLSNNHITFINDKSFEKLSKLRELRLNDNKLHHFSSMVLDEQSNLEILDLSGNNIQCFSSIFFNKATRIREIKVIGNDLLCDCRILPLMSWLRSNSSHSIDIPPCQQFQYSDNESDKQRCAAFPEETCSDDSNLCPPKCSCLDRVVRCSNKNLTSFPSRIPFDTTELYLDANYINEIPAHDLNRLYSLTKLDLSHNRLISLENNTFSNLTRLSTLIISYNKLRCLQPLAFNGLNALRILSLHGNDISFLPQSAFSNLTSITHIAVGSNSLYCDCNMAWFSKWIKSKFIEAGIARCEYPNTVSNQLLLTAQPYQFTCDSKVPTKLATKCDLCLNSPCKNNAICETTSSRKYTCNCTPGFYGVHCENQIDACYGSPCLNNATCKVAQAGRFNCYCNKGFEGDYCEKNIDDCVNSKCENGGKCVDLINSYRCDCPMEYEGKHCEDKLEYCTKKLNPCENNGKCIPINGSYSCMCSPGFTGNNCETNIDDCKNVECQNGGSCVDGILSYDCLCRPGYAGQYCEIPPMMDMEYQKTDACQQSACGQGECVASQNSSDFTCKCHEGFSGPSCDRQMSVGFKNPGAYLALDPLASDGTITMTLRTTSKIGILLYYGDDHFVSAELYDGRVKLVYYIGNFPASHMYSSVKVNDGLPHRISIRTSERKCFLQIDKNPVQIVENSGKSDQLITKGKEMLYIGGLPIEKSQDAKRRFHVKNSESLKGCISSITINEVPINLQQALENVNTEQSCSATVNFCAGIDCGNGKCTNNALSPKGYMCQCDSHFSGEHCDEKRIKCDKQKFRRHHIENECRSVDRIKIAECNGYCGGEQNCCTAVKKKQRKVKMICKNGTTKISTVHIIRQCQCEPTKSVLSEK.

The signal sequence occupies residues 1-16; sequence MLICFIFILLIPESAT. Residues 17–43 enclose the LRRNT 1 domain; the sequence is CPAECVCVDRTVSCVGQQLTEVPQNIP. 20 LRR repeats span residues 22-42, 43-66, 67-90, 91-114, 116-138, 140-162, 163-186, 219-242, 286-309, 310-333, 335-357, 358-381, 383-405, 407-430, 442-465, 489-510, 511-535, 536-559, 561-583, and 585-607; these read VCVD…PQNI, PNDT…DFSS, LMNL…SFSS, LVFL…VFQN, LKLT…QLQG, EFLE…VISS, WVSL…SNAR, TVCA…FMTC, PPST…SFKN, LKNL…AFLG, HNLH…TFEG, LGSL…TFDH, PKLS…TFQN, TSLS…WLAQ, ARCE…KFKC, CDCY…PTSI, PRFA…NIHV, LENL…SFEK, SKLR…VLDE, and SNLE…FFNK. The LRRCT 1 domain maps to 195–243; the sequence is NPWNCDCRLRWMRKWLEKAEGQNKTVCATPLNLQGSSIEILQDKFMTCS. The LRRNT 2 domain maps to 259 to 286; it reads ICPLPCTCTGTTVDCRDSGLTYVPTNLP. An LRRCT 2 domain is found at 417-466; that stretch reads NPLICDCNLQWLAQINLQKNIETSGARCEQPKRLRKKKFATLPPNKFKCK. One can recognise an LRRNT 3 domain in the interval 484–511; that stretch reads ICPTQCDCYGTTVDCNKRGLNTIPTSIP. An LRRCT 3 domain is found at 619–671; the sequence is NDLLCDCRILPLMSWLRSNSSHSIDIPPCQQFQYSDNESDKQRCAAFPEETCS. Residues 677 to 703 form the LRRNT 4 domain; that stretch reads CPPKCSCLDRVVRCSNKNLTSFPSRIP. 6 LRR repeats span residues 681-703, 704-726, 727-750, 752-774, 775-798, and 800-823; these read CSCL…SRIP, FDTT…DLNR, LYSL…TFSN, TRLS…AFNG, LNAL…AFSN, and TSIT…WFSK. An LRRCT 4 domain is found at 810–859; sequence NSLYCDCNMAWFSKWIKSKFIEAGIARCEYPNTVSNQLLLTAQPYQFTCD. EGF-like domains lie at 871-906 and 908-945; these read DLCL…VHCE and QIDA…DYCE. Cystine bridges form between cysteine 873–cysteine 884, cysteine 878–cysteine 894, cysteine 896–cysteine 905, cysteine 912–cysteine 923, cysteine 917–cysteine 933, cysteine 935–cysteine 944, cysteine 951–cysteine 962, cysteine 956–cysteine 971, cysteine 973–cysteine 982, cysteine 989–cysteine 1002, cysteine 996–cysteine 1011, cysteine 1013–cysteine 1022, cysteine 1029–cysteine 1040, cysteine 1034–cysteine 1049, cysteine 1051–cysteine 1060, cysteine 1076–cysteine 1086, cysteine 1081–cysteine 1097, and cysteine 1099–cysteine 1108. One can recognise an EGF-like 1; calcium-binding domain in the interval 947–983; it reads NIDDCVNSKCENGGKCVDLINSYRCDCPMEYEGKHCE. The 39-residue stretch at 985-1023 folds into the EGF-like 3 domain; that stretch reads KLEYCTKKLNPCENNGKCIPINGSYSCMCSPGFTGNNCE. The region spanning 1025 to 1061 is the EGF-like 2; calcium-binding domain; the sequence is NIDDCKNVECQNGGSCVDGILSYDCLCRPGYAGQYCE. Residues 1072 to 1109 enclose the EGF-like 4 domain; sequence KTDACQQSACGQGECVASQNSSDFTCKCHEGFSGPSCD. In terms of domain architecture, Laminin G-like spans 1112-1285; it reads MSVGFKNPGA…LENVNTEQSC (174 aa). The stretch at 1197 to 1221 is one LRR 27 repeat; that stretch reads TSERKCFLQIDKNPVQIVENSGKSD. 8 disulfide bridges follow: cysteine 1259–cysteine 1285, cysteine 1292–cysteine 1302, cysteine 1297–cysteine 1314, cysteine 1316–cysteine 1325, cysteine 1332–cysteine 1368, cysteine 1346–cysteine 1382, cysteine 1357–cysteine 1398, and cysteine 1361–cysteine 1400. One can recognise an EGF-like 5 domain in the interval 1288–1326; that stretch reads TVNFCAGIDCGNGKCTNNALSPKGYMCQCDSHFSGEHCD. The 75-residue stretch at 1332–1406 folds into the CTCK domain; that stretch reads CDKQKFRRHH…QCQCEPTKSV (75 aa).

Interacts with eva-1.

The protein resides in the secreted. Its function is as follows. Functions as a ligand for sax-3 receptor during larval development. Acts via the sax-3/Robo receptor to direct ventral axon guidance and guidance at the midline during embryonic development. This is Slit homolog 1 protein (slt-1) from Caenorhabditis elegans.